Reading from the N-terminus, the 110-residue chain is Iron-sulfur cluster assembly protein CyaY (110 aa).

The protein belongs to the frataxin family.

Its function is as follows. Involved in iron-sulfur (Fe-S) cluster assembly. May act as a regulator of Fe-S biogenesis. The protein is Iron-sulfur cluster assembly protein CyaY of Paracidovorax citrulli (strain AAC00-1) (Acidovorax citrulli).